The sequence spans 393 residues: Fractalkine (393 aa).

A signal peptide spans 1–24; sequence MAPSQLAWLLRLAAFFHLCTLLAG. The chemokine and involved in interaction with ITGAV:ITGB3 and ITGA4:ITGB1 stretch occupies residues 25–100; that stretch reads QHLGMTKCNI…HQTAALTRNG (76 aa). Residues 25–337 lie on the Extracellular side of the membrane; sequence QHLGMTKCNI…PDSQAATRRQ (313 aa). 2 disulfide bridges follow: C32/C58 and C36/C74. N-linked (GlcNAc...) asparagine glycosylation occurs at N33. A mucin-like stalk region spans residues 101–337; that stretch reads GKFEKRVDNV…PDSQAATRRQ (237 aa). 2 disordered regions span residues 114–184 and 213–303; these read ITSA…PQST and EKAT…SGSQ. 2 stretches are compositionally biased toward polar residues: residues 153–172 and 223–240; these read GTSQ…TSKA and ALST…NVGS. A helical membrane pass occupies residues 338–358; it reads AVGLLAFLGLLFCLGVAMFAY. Topologically, residues 359-393 are cytoplasmic; it reads QSLQGCPRKMAGEMVEGLRYVPRSCGSNSYVLVPV.

The protein belongs to the intercrine delta family. Monomer. Forms a ternary complex with CX3CR1 and ITGAV:ITGB3 or ITGA4:ITGB1. Post-translationally, a soluble short form may be released by proteolytic cleavage from the long membrane-anchored form. In terms of tissue distribution, highest levels in brain (neurons). Significant levels in kidney, heart, lung and adrenal gland.

The protein localises to the cell membrane. It localises to the secreted. Functionally, chemokine that acts as a ligand for both CX3CR1 and integrins ITGAV:ITGB3 and ITGA4:ITGB1. The CX3CR1-CX3CL1 signaling exerts distinct functions in different tissue compartments, such as immune response, inflammation, cell adhesion and chemotaxis. Regulates leukocyte adhesion and migration processes at the endothelium. Can activate integrins in both a CX3CR1-dependent and CX3CR1-independent manner. In the presence of CX3CR1, activates integrins by binding to the classical ligand-binding site (site 1) in integrins. In the absence of CX3CR1, binds to a second site (site 2) in integrins which is distinct from site 1 and enhances the binding of other integrin ligands to site 1. In terms of biological role, the soluble form is chemotactic for T-cells and monocytes, but not for neutrophils. Its function is as follows. The membrane-bound form promotes adhesion of those leukocytes to endothelial cells. The sequence is that of Fractalkine (Cx3cl1) from Rattus norvegicus (Rat).